Here is a 1338-residue protein sequence, read N- to C-terminus: Microtubule-associated tumor suppressor 1 homolog (1338 aa).

Residues 1-27 (MSVQTATTENRFQSTLDDNNGNNSESK) show a composition bias toward polar residues. Disordered stretches follow at residues 1 to 28 (MSVQ…ESKN) and 399 to 421 (ESHG…SELK). Residues 469–494 (ESITENNELQQNLDAIKYDLEGLRHS) are a coiled coil. Disordered regions lie at residues 536 to 585 (KVLT…TVQK) and 636 to 695 (LKHT…MGPN). Positions 541 to 555 (PSLQAKDSNPYASKT) are enriched in polar residues. Composition is skewed to low complexity over residues 561 to 573 (PSLS…AQSP) and 646 to 661 (ASSS…AAAA). The F-box domain maps to 731 to 774 (IVPLPTKLAIPSSRNLHKELILGIKNVASQPAKGRVQTTVQRRG). Disordered stretches follow at residues 788-808 (PPRE…KGRP), 883-925 (ALTA…GPAL), and 938-962 (NVEK…PVDP). Polar residues predominate over residues 883–910 (ALTAKSSIPRGRSQSLKVTQTVTGTKKS). Residues 966 to 1298 (ELTKCKAACE…RLSMENEELL (333 aa)) adopt a coiled-coil conformation. A disordered region spans residues 1309–1338 (PKKLSPSSPGIPFHPSRNSGSFSSPTVSPR). Over residues 1324–1338 (SRNSGSFSSPTVSPR) the composition is skewed to polar residues.

Belongs to the MTUS1 family. In terms of assembly, homodimer. Binds microtubules. Interacts with kif2c, aurkb, incenp and SKP1. Probably part of a SCF (SKP1-CUL1-F-box) protein ligase complex. As to expression, present in egg (at protein level).

Its subcellular location is the nucleus. The protein localises to the cytoplasm. It is found in the cytoskeleton. The protein resides in the chromosome. It localises to the midbody. In terms of biological role, regulates microtubule dynamics during mitosis by stimulating kif2c. Probably recognizes and binds to some phosphorylated proteins and promotes their ubiquitination and degradation. In Xenopus laevis (African clawed frog), this protein is Microtubule-associated tumor suppressor 1 homolog (mtus1).